The primary structure comprises 95 residues: Co-chaperonin GroES (95 aa).

It belongs to the GroES chaperonin family. In terms of assembly, heptamer of 7 subunits arranged in a ring. Interacts with the chaperonin GroEL.

The protein localises to the cytoplasm. In terms of biological role, together with the chaperonin GroEL, plays an essential role in assisting protein folding. The GroEL-GroES system forms a nano-cage that allows encapsulation of the non-native substrate proteins and provides a physical environment optimized to promote and accelerate protein folding. GroES binds to the apical surface of the GroEL ring, thereby capping the opening of the GroEL channel. This is Co-chaperonin GroES from Rickettsia typhi (strain ATCC VR-144 / Wilmington).